A 555-amino-acid chain; its full sequence is Protein PLASTID TRANSCRIPTIONALLY ACTIVE 12, chloroplastic (555 aa).

Residues 1–58 constitute a chloroplast transit peptide; that stretch reads MASCYNPWRLFPGMSTAVPAGPVTAPAHSRTCKSSKVFSALPHRRGLLFLGTRRARIK. Disordered stretches follow at residues 80 to 100, 115 to 167, and 468 to 541; these read YFDSTSGQLEPASGARASIPG, ARAP…EPDV, and SYNE…IDDS. A compositionally biased stretch (polar residues) spans 144–154; the sequence is QVTSASGTEGA. Composition is skewed to acidic residues over residues 471-480 and 490-502; these read EDSDDEDEDV and LEDEEDDRDDVAE. The segment covering 508 to 519 has biased composition (polar residues); the sequence is NQNWSALKSTGQ. The segment covering 521 to 538 has biased composition (basic and acidic residues); sequence EKPKEKSKKDEMTLKEAI.

In terms of assembly, component of the plastid-encoded plastid RNA polymerase (PEP) complex.

It is found in the plastid. The protein resides in the chloroplast stroma. The protein localises to the nucleus. Functionally, required for the activity of the plastid-encoded RNA polymerase (PEP) and full expression of genes transcribed by PEP. Required for the proper build-up and formation of the PEP-complex. Binds single-stranded (ss) DNA and RNA, but not double-stranded (ds) DNA. This is Protein PLASTID TRANSCRIPTIONALLY ACTIVE 12, chloroplastic from Zea mays (Maize).